Here is a 338-residue protein sequence, read N- to C-terminus: MTTLRLLISDSYDPWFNLAVEECIFRQMPATQRVLFLWRNADTVVIGRAQNPWKECNTRRMEEDNVRLARRSSGGGAVFHDLGNTCFTFMAGKPEYDKTISTHIVLAALNSLGVMADASGRNDLVVKTPDGDRKVSGSAYRETKDRGFHHGTLLLNADLSRLANYLNPDKKKLAAKGITSVRSRVANLTKLLPGITHEQVCQAVTEAFFAHYGERVDAEVISPDKTPDLPNFAETFARQSSWEWNFGQAPAFSHLLDERFTWGGVELHFDVEKGVITRAQVFTDSLNPAPLEALAERLQGCLYRADMLQQACEALLVDFPEQEKELRELSAWIAGAVR.

The region spanning 29–216 is the BPL/LPL catalytic domain; sequence PATQRVLFLW…AFFAHYGERV (188 aa). ATP contacts are provided by residues R71, 76–79, and K134; that span reads GAVF. K134 is a (R)-lipoate binding site.

This sequence belongs to the LplA family. Monomer.

It is found in the cytoplasm. It carries out the reaction L-lysyl-[lipoyl-carrier protein] + (R)-lipoate + ATP = N(6)-[(R)-lipoyl]-L-lysyl-[lipoyl-carrier protein] + AMP + diphosphate + H(+). It functions in the pathway protein modification; protein lipoylation via exogenous pathway; protein N(6)-(lipoyl)lysine from lipoate: step 1/2. The protein operates within protein modification; protein lipoylation via exogenous pathway; protein N(6)-(lipoyl)lysine from lipoate: step 2/2. Its function is as follows. Catalyzes both the ATP-dependent activation of exogenously supplied lipoate to lipoyl-AMP and the transfer of the activated lipoyl onto the lipoyl domains of lipoate-dependent enzymes. The protein is Lipoate-protein ligase A of Salmonella agona (strain SL483).